Reading from the N-terminus, the 309-residue chain is Taste receptor type 2 member 124 (309 aa).

The Extracellular portion of the chain corresponds to 1-7 (MVSVLHS). A helical membrane pass occupies residues 8–28 (ISTIIIIAEFVWGNLSNGLIV). Topologically, residues 29 to 46 (LKNCLDWINIKELSTLDQ) are cytoplasmic. A helical transmembrane segment spans residues 47 to 67 (ILILLAISRISLIWETLLMWV). Residues 68 to 81 (KDKLISSITIEELK) lie on the Extracellular side of the membrane. The helical transmembrane segment at 82 to 102 (MIMFSFMLSSHFSLWLATALS) threads the bilayer. At 103–127 (TFYLFRIANCSWQIFLYLKWRLKHL) the chain is on the cytoplasmic side. Residues 128–148 (IVQMLLGSVMFLIANIIQITI) form a helical membrane-spanning segment. The Extracellular segment spans residues 149–182 (TLEKRFYQYKGNTSVNSIQNEFALLIEMMLFNMT). 2 N-linked (GlcNAc...) asparagine glycosylation sites follow: Asn-160 and Asn-180. Residues 183–203 (IFSVIPFLLALISFFLLIFSL) form a helical membrane-spanning segment. Over 204-227 (WKHLQRMQLNSREDRDPSTKAHRN) the chain is Cytoplasmic. Residues 228-248 (ALGIMVSFLLLYTMYVLSLLI) traverse the membrane as a helical segment. At 249-261 (SWIAQKNQSELVH) the chain is on the extracellular side. Asn-255 carries an N-linked (GlcNAc...) asparagine glycan. The chain crosses the membrane as a helical span at residues 262–282 (IICMITSLLNPSVHSSILILG). Residues 283 to 309 (NFKLKQSSLCILRHLGCRLKSQNTPTT) lie on the Cytoplasmic side of the membrane.

Belongs to the G-protein coupled receptor T2R family.

The protein resides in the membrane. Putative taste receptor which may play a role in the perception of bitterness. The chain is Taste receptor type 2 member 124 from Rattus norvegicus (Rat).